The primary structure comprises 360 residues: Photosystem II protein D1 (360 aa).

The next 3 membrane-spanning stretches (helical) occupy residues 29–46, 118–133, and 142–156; these read YIGW…TATT, HFLL…EWEF, and WISV…AASA. Histidine 118 contributes to the chlorophyll a binding site. Tryptophan 126 lines the pheophytin a pocket. [CaMn4O5] cluster is bound by residues aspartate 170 and glutamate 189. A helical membrane pass occupies residues 197–218; sequence FHQLGVAGVFGGSLFSAMHGSL. A chlorophyll a-binding site is contributed by histidine 198. A quinone is bound by residues histidine 215 and 264–265; that span reads SF. Histidine 215 lines the Fe cation pocket. Histidine 272 contributes to the Fe cation binding site. Residues 274 to 288 form a helical membrane-spanning segment; that stretch reads FLGLWPVVGIWFTAL. The [CaMn4O5] cluster site is built by histidine 332, glutamate 333, aspartate 342, and alanine 344. A propeptide spanning residues 345–360 is cleaved from the precursor; it reads SGESLPVALTAPAVIG.

It belongs to the reaction center PufL/M/PsbA/D family. As to quaternary structure, PSII is composed of 1 copy each of membrane proteins PsbA, PsbB, PsbC, PsbD, PsbE, PsbF, PsbH, PsbI, PsbJ, PsbK, PsbL, PsbM, PsbT, PsbX, PsbY, PsbZ, Psb30/Ycf12, at least 3 peripheral proteins of the oxygen-evolving complex and a large number of cofactors. It forms dimeric complexes. It depends on The D1/D2 heterodimer binds P680, chlorophylls that are the primary electron donor of PSII, and subsequent electron acceptors. It shares a non-heme iron and each subunit binds pheophytin, quinone, additional chlorophylls, carotenoids and lipids. D1 provides most of the ligands for the Mn4-Ca-O5 cluster of the oxygen-evolving complex (OEC). There is also a Cl(-1) ion associated with D1 and D2, which is required for oxygen evolution. The PSII complex binds additional chlorophylls, carotenoids and specific lipids. as a cofactor. Post-translationally, tyr-161 forms a radical intermediate that is referred to as redox-active TyrZ, YZ or Y-Z. In terms of processing, C-terminally processed by CTPA; processing is essential to allow assembly of the oxygen-evolving complex and thus photosynthetic growth.

The protein localises to the plastid. It localises to the chloroplast thylakoid membrane. It catalyses the reaction 2 a plastoquinone + 4 hnu + 2 H2O = 2 a plastoquinol + O2. In terms of biological role, photosystem II (PSII) is a light-driven water:plastoquinone oxidoreductase that uses light energy to abstract electrons from H(2)O, generating O(2) and a proton gradient subsequently used for ATP formation. It consists of a core antenna complex that captures photons, and an electron transfer chain that converts photonic excitation into a charge separation. The D1/D2 (PsbA/PsbD) reaction center heterodimer binds P680, the primary electron donor of PSII as well as several subsequent electron acceptors. This chain is Photosystem II protein D1, found in Guillardia theta (Cryptophyte).